A 356-amino-acid polypeptide reads, in one-letter code: Probable cinnamyl alcohol dehydrogenase (356 aa).

Cys-47 provides a ligand contact to Zn(2+). Ser-49 contacts NADP(+). Positions 69, 70, 100, 103, 106, 114, and 163 each coordinate Zn(2+). NADP(+)-binding positions include Thr-167, 188–193, 211–216, Thr-251, Gly-275, and 298–300; these read GLGGVG, SSSDKK, and SFI.

Belongs to the zinc-containing alcohol dehydrogenase family. As to quaternary structure, homodimer. Zn(2+) is required as a cofactor.

The enzyme catalyses (E)-cinnamyl alcohol + NADP(+) = (E)-cinnamaldehyde + NADPH + H(+). It carries out the reaction (E)-coniferol + NADP(+) = (E)-coniferaldehyde + NADPH + H(+). It catalyses the reaction (E)-sinapyl alcohol + NADP(+) = (E)-sinapaldehyde + NADPH + H(+). The catalysed reaction is (E)-4-coumaroyl alcohol + NADP(+) = (E)-4-coumaraldehyde + NADPH + H(+). The enzyme catalyses (E)-caffeyl alcohol + NADP(+) = (E)-caffeyl aldehyde + NADPH + H(+). Its pathway is aromatic compound metabolism; phenylpropanoid biosynthesis. Its function is as follows. Involved in lignin biosynthesis. Catalyzes the final step specific for the production of lignin monomers. Catalyzes the NADPH-dependent reduction of coniferaldehyde, 5-hydroxyconiferaldehyde, sinapaldehyde, 4-coumaraldehyde and caffeyl aldehyde to their respective alcohols. This chain is Probable cinnamyl alcohol dehydrogenase (CAD), found in Eucalyptus globulus (Tasmanian blue gum).